A 1104-amino-acid polypeptide reads, in one-letter code: DNA polymerase delta catalytic subunit (1104 aa).

The tract at residues 1 to 60 (MKRSIVTGGGNNDKKFKAQPPPKNNYRGGGDDEEDDEFEEDDDEDEGDEFGEEEDEDDID) is disordered. The segment covering 31–60 (DDEEDDEFEEDDDEDEGDEFGEEEDEDDID) has biased composition (acidic residues). Zn(2+)-binding residues include Cys-1012, Cys-1015, Cys-1027, and Cys-1030. The CysA-type zinc-finger motif lies at 1012 to 1030 (CMNCPKELTDTESTTCINC). [4Fe-4S] cluster contacts are provided by Cys-1059, Cys-1062, Cys-1072, and Cys-1077. Residues 1059–1077 (CQRCSGSLHQPVLCSNRDC) carry the CysB motif motif.

Belongs to the DNA polymerase type-B family. As to quaternary structure, heterotetramer composed of subunits of 125 kDa, 50 kDa, 66 kDa and 12 kDa. The 125 kDa subunit contains the polymerase active site and most likely the active site for the 3'-5' exonuclease activity. [4Fe-4S] cluster serves as cofactor.

The protein localises to the nucleus. It carries out the reaction DNA(n) + a 2'-deoxyribonucleoside 5'-triphosphate = DNA(n+1) + diphosphate. In terms of biological role, possesses two enzymatic activities: DNA synthesis (polymerase) and an exonucleolytic activity that degrades single stranded DNA in the 3'- to 5'-direction. This Dictyostelium discoideum (Social amoeba) protein is DNA polymerase delta catalytic subunit (pold1).